Consider the following 422-residue polypeptide: MPVLAALLRRGPLLQRRVQEIRYAERSYVSKPTLNEVVIVSAIRTPIGSFLGSLSSLPATKLGSIAIQGAIEKAGIPKEEVKEAYMGNVLQGGEGQAPTRQAVLGAGLPISTPCTTINKVCASGMKAIMMASQNLMCGHQDVMVAGGMESMSNVPYVMNRGATPYGGVKLEDLIVKDGLTDVYNKIHMGNCAENTAKKLNITREEQDTYALNSYTRSKAAWEAGRFGNEVVPVTITVKGKPDVVVKEDEEYKRVDFSKIPKLKTVFQRENGTVTAANASTLNDGAAAVVLMTADAAKRLNVKPLARIAAFADAAVEPIDFPLAPAYAVPKVLKDAGLKKEDITMWEVNEAFSVVVLANIKMLEMDPQKVNINGGAVSLGHPIGMSGARIVVHLAHALKQGEYGLASICNGGGGASAMLIQKL.

A mitochondrion-targeting transit peptide spans 1–28 (MPVLAALLRRGPLLQRRVQEIRYAERSY). An N6-acetyllysine; alternate modification is found at lysine 61. Lysine 61 is modified (N6-succinyllysine; alternate). Lysine 73 carries the N6-succinyllysine modification. Cysteine 121 acts as the Acyl-thioester intermediate in catalysis. 4 positions are modified to N6-acetyllysine; alternate: lysine 169, lysine 176, lysine 185, and lysine 197. Residues lysine 169, lysine 176, lysine 185, and lysine 197 each carry the N6-succinyllysine; alternate modification. Residue tyrosine 214 coordinates CoA. Tyrosine 214 contributes to the K(+) binding site. Position 218 is an N6-acetyllysine; alternate (lysine 218). Residue lysine 218 is modified to N6-succinyllysine; alternate. At lysine 238 the chain carries N6-succinyllysine. Residue lysine 240 is modified to N6-acetyllysine; alternate. Position 240 is an N6-succinyllysine; alternate (lysine 240). Residues lysine 246 and lysine 252 each carry the N6-acetyllysine modification. Residues 253 to 255 (RVD) and lysine 258 each bind CoA. Lysine 258 carries the N6-acetyllysine; alternate modification. At lysine 258 the chain carries N6-succinyllysine; alternate. N6-succinyllysine is present on residues lysine 261 and lysine 263. 3 residues coordinate K(+): alanine 275, alanine 276, and alanine 278. Residue serine 279 coordinates CoA. Lysine 333 is subject to N6-acetyllysine. Valine 376 contacts K(+). The Proton donor/acceptor role is filled by cysteine 408.

The protein belongs to the thiolase-like superfamily. Thiolase family. Homotetramer. Succinylation at Lys-263, adjacent to a coenzyme A binding site. Desuccinylated by SIRT5.

The protein resides in the mitochondrion. The catalysed reaction is 2 acetyl-CoA = acetoacetyl-CoA + CoA. The enzyme catalyses propanoyl-CoA + acetyl-CoA = 2-methyl-3-oxobutanoyl-CoA + CoA. The protein operates within lipid metabolism; fatty acid beta-oxidation. Its activity is regulated as follows. Activated by potassium ions, but not sodium ions. Functionally, this is one of the enzymes that catalyzes the last step of the mitochondrial beta-oxidation pathway, an aerobic process breaking down fatty acids into acetyl-CoA. Using free coenzyme A/CoA, catalyzes the thiolytic cleavage of medium- to long-chain 3-oxoacyl-CoAs into acetyl-CoA and a fatty acyl-CoA shortened by two carbon atoms. The activity of the enzyme is reversible and it can also catalyze the condensation of two acetyl-CoA molecules into acetoacetyl-CoA. Thereby, it plays a major role in ketone body metabolism. The sequence is that of Acetyl-CoA acetyltransferase, mitochondrial (ACAT1) from Bos taurus (Bovine).